The sequence spans 290 residues: Fat storage-inducing transmembrane protein 1 (290 aa).

5 helical membrane-spanning segments follow: residues 1–21 (MFLN…LGNT), 26–46 (HFHL…LWVS), 65–85 (SGWG…SFSV), 173–193 (LLLC…GPYL), and 205–225 (ILFL…LCLL).

This sequence belongs to the FIT family. FIT1 subfamily.

It is found in the endoplasmic reticulum membrane. In terms of biological role, may play an important role in the formation of lipid droplets (LDs) which are storage organelles at the center of lipid and energy homeostasis. May directly bind to diacylglycerol (DAGs) and triacylglycerol. This is Fat storage-inducing transmembrane protein 1 (fitm1l) from Danio rerio (Zebrafish).